A 394-amino-acid polypeptide reads, in one-letter code: Elongation factor Tu 2 (394 aa).

A tr-type G domain is found at 10–204 (KPHVNVGTIG…FLDSYIPEPE (195 aa)). The tract at residues 19–26 (GHVDHGKT) is G1. 19–26 (GHVDHGKT) serves as a coordination point for GTP. Mg(2+) is bound at residue threonine 26. The segment at 60–64 (GITIN) is G2. A G3 region spans residues 81–84 (DCPG). Residues 81-85 (DCPGH) and 136-139 (NKCD) each bind GTP. Residues 136 to 139 (NKCD) are G4. The tract at residues 174–176 (SAL) is G5.

It belongs to the TRAFAC class translation factor GTPase superfamily. Classic translation factor GTPase family. EF-Tu/EF-1A subfamily. As to quaternary structure, monomer.

It localises to the cytoplasm. The enzyme catalyses GTP + H2O = GDP + phosphate + H(+). In terms of biological role, GTP hydrolase that promotes the GTP-dependent binding of aminoacyl-tRNA to the A-site of ribosomes during protein biosynthesis. The chain is Elongation factor Tu 2 from Escherichia coli O139:H28 (strain E24377A / ETEC).